Consider the following 872-residue polypeptide: MSLYRSPSAALLKSPSQAAFGAPFGSMSVADLGSLTRLEDKIRLLQEDLESERELRNRVERERADLSVQVIALTDRLEDAEGTTDSQIESNRKREGELSKLRKLLEESQLESEDAMNVLRKKHQDSCLDYQDQIEQLQKKNAKIDRERQRVQHEVIELTATIDQLQKDKHTAEKAAERFEAQANELANKVEDLNKHVNDLAQQRQRLQAENNDLLKEVHDQKVQLDNLQHVKYTLAQQLEEARRRLEDAERERSQLQSQLHQVQLELDSVRTALDEESIARSDAEHKLNLANTEITQWKSKFDAEVALHHEEVEDLRKKMLQKQAEYEEQIEIMLQKISQLEKAKSRLQSEVEVLIVDLEKAQNTIALLERAREQLERQVGELKVRIDEITVELEAAQRELRAVNAELQKMKHLYEKAVEQKEALARENKKLHDELHEAKEALADANRKLHELDLENARLAGEIRELQTALKEADAQRRDAENRAQRALAELQALRIEMERRLQEKEEEMEALRKNLQFEIDRLIAALADAEARMKSEISRLKKKYQAEIAELEMTVDNLNRANIEAQKTIKKQSEQLKILQASLEDTQRQLQQVLDQYALAQRKVAALSAELEECKTALDNAIRARKQAEVDLEEANGRISDLISINNNLTSIKNKLETELSTAQADLDEVTKELHAADERANRALADAARAVEQLHEEQEHSMKIDALRKSLEEQVKQLQVQIQEAEAAALLGGKRVIAKLETRIRDLETALDEETRRHKETQNALRKKDRRIKEVQQLVDEEHKNFVMAQDTADRLTEKLNIQKRQLAESESVTMQNLQRVRRYQHELEDAEGRADQAESSLHLIRAKHRSSVVTGKSSSKIFVTEDDY.

The nonhelical region stretch occupies residues 1–31 (MSLYRSPSAALLKSPSQAAFGAPFGSMSVAD). Positions 32–851 (LGSLTRLEDK…ESSLHLIRAK (820 aa)) form a coiled coil. The segment at 294–376 (EITQWKSKFD…ALLERAREQL (83 aa)) is interaction with unc-89. The tract at residues 856–866 (VVTGKSSSKIF) is nonhelical region.

This sequence belongs to the paramyosin family. In terms of assembly, homodimer. May interact with unc-89 (via SH3 domain). In terms of processing, phosphorylated on serine residues in the N-terminal non-helical region. Expressed in body wall muscles of larvae and adults (at protein level). Expressed in gonadal myoepithelial sheath cells (at protein level).

Its subcellular location is the cytoplasm. It is found in the myofibril. It localises to the sarcomere. The protein localises to the a band. In terms of biological role, structural component of the muscle thick filaments which is involved in assembly and organization of sarcomere myofilaments. Involved in ovulation. Plays a role in the formation of muscle connections, also called muscle arm extensions, between the body wall and the motor axons in the dorsal and ventral cord. In Caenorhabditis elegans, this protein is Paramyosin (unc-15).